Consider the following 176-residue polypeptide: ATP synthase subunit delta (176 aa).

It belongs to the ATPase delta chain family. As to quaternary structure, F-type ATPases have 2 components, F(1) - the catalytic core - and F(0) - the membrane proton channel. F(1) has five subunits: alpha(3), beta(3), gamma(1), delta(1), epsilon(1). F(0) has three main subunits: a(1), b(2) and c(10-14). The alpha and beta chains form an alternating ring which encloses part of the gamma chain. F(1) is attached to F(0) by a central stalk formed by the gamma and epsilon chains, while a peripheral stalk is formed by the delta and b chains.

It localises to the cell inner membrane. F(1)F(0) ATP synthase produces ATP from ADP in the presence of a proton or sodium gradient. F-type ATPases consist of two structural domains, F(1) containing the extramembraneous catalytic core and F(0) containing the membrane proton channel, linked together by a central stalk and a peripheral stalk. During catalysis, ATP synthesis in the catalytic domain of F(1) is coupled via a rotary mechanism of the central stalk subunits to proton translocation. Its function is as follows. This protein is part of the stalk that links CF(0) to CF(1). It either transmits conformational changes from CF(0) to CF(1) or is implicated in proton conduction. This chain is ATP synthase subunit delta, found in Actinobacillus succinogenes (strain ATCC 55618 / DSM 22257 / CCUG 43843 / 130Z).